The sequence spans 123 residues: Small ribosomal subunit protein uS12 (123 aa).

Aspartate 89 carries the post-translational modification 3-methylthioaspartic acid.

The protein belongs to the universal ribosomal protein uS12 family. Part of the 30S ribosomal subunit. Contacts proteins S8 and S17. May interact with IF1 in the 30S initiation complex.

With S4 and S5 plays an important role in translational accuracy. Functionally, interacts with and stabilizes bases of the 16S rRNA that are involved in tRNA selection in the A site and with the mRNA backbone. Located at the interface of the 30S and 50S subunits, it traverses the body of the 30S subunit contacting proteins on the other side and probably holding the rRNA structure together. The combined cluster of proteins S8, S12 and S17 appears to hold together the shoulder and platform of the 30S subunit. The sequence is that of Small ribosomal subunit protein uS12 from Syntrophobacter fumaroxidans (strain DSM 10017 / MPOB).